A 97-amino-acid chain; its full sequence is MEDHTLVAIVVFFGNGEPFHVSLSVEMVFVLLLSSTRIHEVVVLICYKLQHATWSWGNMSKNFSLKPDISLSFLLDIISINDICIYGCIALTVVFIL.

Helical transmembrane passes span 5 to 25 (TLVA…SLSV), 27 to 47 (MVFV…LICY), and 77 to 97 (IISI…VFIL).

It is found in the membrane. This is an uncharacterized protein from Saccharomyces cerevisiae (strain ATCC 204508 / S288c) (Baker's yeast).